The following is a 285-amino-acid chain: Putative ABC transporter ATP-binding protein CPE0195 (285 aa).

Residues 6–242 form the ABC transporter domain; sequence LKVEELNYNY…KEVIRKVNLR (237 aa). Position 39 to 46 (39 to 46) interacts with ATP; that stretch reads GGNGVGKS.

The protein belongs to the ABC transporter superfamily.

It localises to the cell membrane. Its function is as follows. Probably part of an ABC transporter complex. Responsible for energy coupling to the transport system. The protein is Putative ABC transporter ATP-binding protein CPE0195 of Clostridium perfringens (strain 13 / Type A).